The primary structure comprises 89 residues: Large ribosomal subunit protein eL34 (89 aa).

Belongs to the eukaryotic ribosomal protein eL34 family.

The sequence is that of Large ribosomal subunit protein eL34 from Methanococcus vannielii (strain ATCC 35089 / DSM 1224 / JCM 13029 / OCM 148 / SB).